Consider the following 398-residue polypeptide: tRNA-specific 2-thiouridylase MnmA (398 aa).

ATP contacts are provided by residues 18–25 (AMSGGVDS) and Leu44. Cys112 serves as the catalytic Nucleophile. A disulfide bond links Cys112 and Cys213. Gly136 contributes to the ATP binding site. An interaction with tRNA region spans residues 163–165 (RDQ). Cys213 serves as the catalytic Cysteine persulfide intermediate.

The protein belongs to the MnmA/TRMU family.

The protein resides in the cytoplasm. The enzyme catalyses S-sulfanyl-L-cysteinyl-[protein] + uridine(34) in tRNA + AH2 + ATP = 2-thiouridine(34) in tRNA + L-cysteinyl-[protein] + A + AMP + diphosphate + H(+). Its function is as follows. Catalyzes the 2-thiolation of uridine at the wobble position (U34) of tRNA, leading to the formation of s(2)U34. The sequence is that of tRNA-specific 2-thiouridylase MnmA from Rhizobium meliloti (strain 1021) (Ensifer meliloti).